We begin with the raw amino-acid sequence, 249 residues long: Probable septum site-determining protein MinC (249 aa).

Residues 115 to 141 (KPAQEAPAQAEPEAAAAPEPANEPAPA) are disordered. Residues 118-141 (QEAPAQAEPEAAAAPEPANEPAPA) show a composition bias toward low complexity.

It belongs to the MinC family. As to quaternary structure, interacts with MinD and FtsZ.

Functionally, cell division inhibitor that blocks the formation of polar Z ring septums. Rapidly oscillates between the poles of the cell to destabilize FtsZ filaments that have formed before they mature into polar Z rings. Prevents FtsZ polymerization. The polypeptide is Probable septum site-determining protein MinC (Marinobacter nauticus (strain ATCC 700491 / DSM 11845 / VT8) (Marinobacter aquaeolei)).